A 278-amino-acid polypeptide reads, in one-letter code: Trans-2,3-dihydro-3-hydroxyanthranilate isomerase (278 aa).

E45 is an active-site residue.

The protein belongs to the PhzF family.

The catalysed reaction is (5S,6S)-6-amino-5-hydroxycyclohexa-1,3-diene-1-carboxyate = (1R,6S)-6-amino-5-oxocyclohex-2-ene-1-carboxylate. Its pathway is secondary metabolite biosynthesis; pyocyanine biosynthesis. Its function is as follows. Isomerase that catalyzes the condensation of two molecules of trans-2,3-dihydro-3-hydroxyanthranilic acid (DHHA) into the phenazine ring system. The final product is not yet known. This chain is Trans-2,3-dihydro-3-hydroxyanthranilate isomerase (phzF1), found in Pseudomonas aeruginosa (strain ATCC 15692 / DSM 22644 / CIP 104116 / JCM 14847 / LMG 12228 / 1C / PRS 101 / PAO1).